An 808-amino-acid chain; its full sequence is Transducin beta-like protein 3 (808 aa).

At Ala2 the chain carries N-acetylalanine. 13 WD repeats span residues 64–105 (EDQE…RLWK), 107–146 (IHTAPVATMAFDPTSTLLATGGCDGAVRVWDIVRHYGTHH), 149–190 (GSPG…CLAV), 193–232 (AHYSAVTSLAFSADGHTMLSSGRDKICIIWDLQSCQATRT), 245–284 (LPEEPVSQLGVKSPGLYFLTAGDQGTLRVWEAASGQCVYT), 290–329 (GPGQELTHCTLAHTAGVVLTATADHNLLLYEARSLRLQKQ), 332–372 (GYSE…CQIL), 374–413 (GHTDIVLALDVFRKGWLFASCAKDQSVRIWRMNKAGQVMC), 419–459 (GHTH…LSKN), 477–516 (CHDKDINSVAIAPNDKLLATGSQDRTAKLWALPQCQLLGV), 519–560 (GHRR…KTFE), 562–602 (HDAS…RTLD), and 604–642 (HEDKVWGLHCSRLDDHALTGASDSRVILWKDVTEAEQAE). The residue at position 257 (Ser257) is a Phosphoserine. Lys407 participates in a covalent cross-link: Glycyl lysine isopeptide (Lys-Gly) (interchain with G-Cter in SUMO2).

As to quaternary structure, part of the small subunit (SSU) processome, composed of more than 70 proteins and the RNA chaperone small nucleolar RNA (snoRNA) U3.

Its subcellular location is the nucleus. It localises to the nucleolus. Functionally, part of the small subunit (SSU) processome, first precursor of the small eukaryotic ribosomal subunit. During the assembly of the SSU processome in the nucleolus, many ribosome biogenesis factors, an RNA chaperone and ribosomal proteins associate with the nascent pre-rRNA and work in concert to generate RNA folding, modifications, rearrangements and cleavage as well as targeted degradation of pre-ribosomal RNA by the RNA exosome. In Homo sapiens (Human), this protein is Transducin beta-like protein 3.